Consider the following 271-residue polypeptide: ATP synthase subunit a (271 aa).

5 consecutive transmembrane segments (helical) span residues 40–60 (TINI…LVLF), 100–120 (LIAP…LMDL), 146–166 (DVNV…FYSI), 220–240 (LIFI…LNVP), and 242–262 (AIFH…LTIV).

Belongs to the ATPase A chain family. F-type ATPases have 2 components, CF(1) - the catalytic core - and CF(0) - the membrane proton channel. CF(1) has five subunits: alpha(3), beta(3), gamma(1), delta(1), epsilon(1). CF(0) has three main subunits: a(1), b(2) and c(9-12). The alpha and beta chains form an alternating ring which encloses part of the gamma chain. CF(1) is attached to CF(0) by a central stalk formed by the gamma and epsilon chains, while a peripheral stalk is formed by the delta and b chains.

The protein localises to the cell inner membrane. Its function is as follows. Key component of the proton channel; it plays a direct role in the translocation of protons across the membrane. The polypeptide is ATP synthase subunit a (Shigella dysenteriae serotype 1 (strain Sd197)).